Reading from the N-terminus, the 206-residue chain is Pyridoxine/pyridoxamine 5'-phosphate oxidase (206 aa).

FMN is bound by residues arginine 53 to lysine 58, tyrosine 68 to threonine 69, lysine 75, and glutamine 97. Lysine 58 lines the substrate pocket. Substrate-binding residues include tyrosine 115, arginine 119, and serine 123. Residues glutamine 132–serine 133 and tryptophan 177 each bind FMN. Substrate is bound at residue arginine 183–histidine 185. Arginine 187 serves as a coordination point for FMN.

The protein belongs to the pyridoxamine 5'-phosphate oxidase family. Homodimer. FMN serves as cofactor.

It carries out the reaction pyridoxamine 5'-phosphate + O2 + H2O = pyridoxal 5'-phosphate + H2O2 + NH4(+). The catalysed reaction is pyridoxine 5'-phosphate + O2 = pyridoxal 5'-phosphate + H2O2. It functions in the pathway cofactor metabolism; pyridoxal 5'-phosphate salvage; pyridoxal 5'-phosphate from pyridoxamine 5'-phosphate: step 1/1. The protein operates within cofactor metabolism; pyridoxal 5'-phosphate salvage; pyridoxal 5'-phosphate from pyridoxine 5'-phosphate: step 1/1. Its function is as follows. Catalyzes the oxidation of either pyridoxine 5'-phosphate (PNP) or pyridoxamine 5'-phosphate (PMP) into pyridoxal 5'-phosphate (PLP). This chain is Pyridoxine/pyridoxamine 5'-phosphate oxidase, found in Sinorhizobium fredii (strain NBRC 101917 / NGR234).